The following is a 235-amino-acid chain: Ubiquinone/menaquinone biosynthesis C-methyltransferase UbiE (235 aa).

S-adenosyl-L-methionine-binding residues include Thr-60, Asp-81, and Ser-126.

Belongs to the class I-like SAM-binding methyltransferase superfamily. MenG/UbiE family.

It carries out the reaction a 2-demethylmenaquinol + S-adenosyl-L-methionine = a menaquinol + S-adenosyl-L-homocysteine + H(+). The enzyme catalyses a 2-methoxy-6-(all-trans-polyprenyl)benzene-1,4-diol + S-adenosyl-L-methionine = a 5-methoxy-2-methyl-3-(all-trans-polyprenyl)benzene-1,4-diol + S-adenosyl-L-homocysteine + H(+). It functions in the pathway quinol/quinone metabolism; menaquinone biosynthesis; menaquinol from 1,4-dihydroxy-2-naphthoate: step 2/2. The protein operates within cofactor biosynthesis; ubiquinone biosynthesis. Methyltransferase required for the conversion of demethylmenaquinol (DMKH2) to menaquinol (MKH2) and the conversion of 2-polyprenyl-6-methoxy-1,4-benzoquinol (DDMQH2) to 2-polyprenyl-3-methyl-6-methoxy-1,4-benzoquinol (DMQH2). The sequence is that of Ubiquinone/menaquinone biosynthesis C-methyltransferase UbiE from Geobacter sp. (strain M21).